The following is a 221-amino-acid chain: CDC5 pindle pole body anchor protein 1 (221 aa).

Positions 142 to 221 are disordered; that stretch reads KNIERDNLKP…PTEDSVPHAE (80 aa). A phosphoserine mark is found at S158, S170, and S175. Positions 165–170 match the CDC5-binding motif; it reads PLVTSS. A compositionally biased stretch (polar residues) spans 166-188; it reads LVTSSPIHMSPLQSRQRPVSSLQ. A CLB3-docking motif is present at residues 189-195; the sequence is PPKGPNF. The CDC14-binding motif lies at 200 to 202; sequence PKL.

Interacts with CDC5 and CDC14. Post-translationally, phosphorylated by CLB3-CDK1 in metaphase which is required for correct localization at the nuclear envelop and the spindle pole body, and dephosphorylated by CDC14 in early anaphase.

It is found in the nucleus membrane. The protein localises to the cytoplasm. Its subcellular location is the cytoskeleton. The protein resides in the microtubule organizing center. It localises to the spindle pole body. Its function is as follows. Specialized component of the nuclear membrane that may be involved in the connection of the spindle pole body (SPB) to the nuclear envelope. Recruits CDC5 to spindle pole bodies in metaphase. The sequence is that of CDC5 pindle pole body anchor protein 1 from Saccharomyces cerevisiae (strain ATCC 204508 / S288c) (Baker's yeast).